Consider the following 231-residue polypeptide: Large ribosomal subunit protein uL1 (231 aa).

This sequence belongs to the universal ribosomal protein uL1 family. As to quaternary structure, part of the 50S ribosomal subunit.

Binds directly to 23S rRNA. The L1 stalk is quite mobile in the ribosome, and is involved in E site tRNA release. Its function is as follows. Protein L1 is also a translational repressor protein, it controls the translation of the L11 operon by binding to its mRNA. The sequence is that of Large ribosomal subunit protein uL1 from Legionella pneumophila (strain Paris).